A 202-amino-acid chain; its full sequence is Putative 3-methyladenine DNA glycosylase (202 aa).

The protein belongs to the DNA glycosylase MPG family.

In Staphylococcus aureus (strain bovine RF122 / ET3-1), this protein is Putative 3-methyladenine DNA glycosylase.